Consider the following 362-residue polypeptide: 3-isopropylmalate dehydrogenase (362 aa).

Residue 78 to 91 coordinates NAD(+); that stretch reads GYKWDSLPPHQRPE. Arg-98, Arg-108, Arg-136, and Asp-226 together coordinate substrate. Positions 226, 250, and 254 each coordinate Mg(2+). 284 to 296 contacts NAD(+); that stretch reads GSAPDIAGQDKAN.

This sequence belongs to the isocitrate and isopropylmalate dehydrogenases family. LeuB type 1 subfamily. In terms of assembly, homodimer. It depends on Mg(2+) as a cofactor. Requires Mn(2+) as cofactor.

It is found in the cytoplasm. The enzyme catalyses (2R,3S)-3-isopropylmalate + NAD(+) = 4-methyl-2-oxopentanoate + CO2 + NADH. Its pathway is amino-acid biosynthesis; L-leucine biosynthesis; L-leucine from 3-methyl-2-oxobutanoate: step 3/4. In terms of biological role, catalyzes the oxidation of 3-carboxy-2-hydroxy-4-methylpentanoate (3-isopropylmalate) to 3-carboxy-4-methyl-2-oxopentanoate. The product decarboxylates to 4-methyl-2 oxopentanoate. In Nostoc sp. (strain PCC 7120 / SAG 25.82 / UTEX 2576), this protein is 3-isopropylmalate dehydrogenase.